The following is a 185-amino-acid chain: Signal peptidase I (185 aa).

The Cytoplasmic portion of the chain corresponds to 1-20; sequence MKSEKEKTSKKSAVLDWAKA. The chain crosses the membrane as a helical span at residues 21–41; sequence IIIAVVLAVLIRNFLFAPYVV. The Extracellular segment spans residues 42 to 185; the sequence is DGESMEPTLH…FPFNEIRKTK (144 aa). Active-site residues include Ser45 and Lys85.

Belongs to the peptidase S26 family.

The protein localises to the cell membrane. The enzyme catalyses Cleavage of hydrophobic, N-terminal signal or leader sequences from secreted and periplasmic proteins.. In Bacillus amyloliquefaciens (Bacillus velezensis), this protein is Signal peptidase I (sipA).